Here is a 227-residue protein sequence, read N- to C-terminus: Large ribosomal subunit protein uL3 (227 aa).

The interval 146 to 167 (RGPMAHGSKFHRHQGSNGACSS) is disordered.

Belongs to the universal ribosomal protein uL3 family. Part of the 50S ribosomal subunit. Forms a cluster with proteins L14 and L19.

One of the primary rRNA binding proteins, it binds directly near the 3'-end of the 23S rRNA, where it nucleates assembly of the 50S subunit. The polypeptide is Large ribosomal subunit protein uL3 (Agathobacter rectalis (strain ATCC 33656 / DSM 3377 / JCM 17463 / KCTC 5835 / VPI 0990) (Eubacterium rectale)).